The following is a 179-amino-acid chain: HTH-type transcriptional regulator AldR (179 aa).

An HTH asnC-type domain is found at 32-93 (LDEVDRRILS…DIDPVAVGLP (62 aa)). The H-T-H motif DNA-binding region spans 51-70 (NNALADTVGIAPSTCHGRVR).

As to quaternary structure, homooctamer. Homotetramer. Tetramer of dimers. The N-terminal DNA-binding domains are swapped, forming a dimer, and four dimers are assembled into an octamer through crystal symmetry.

The DNA-binding activity of AldR is modulated by interaction of AldR with various amino acids. Alanine, tryptophan, tyrosine and aspartate completely abolish the DNA binding ability of AldR. On the other hand, glutamate and asparagine reduce AldR binding to DNA but do not completely abolish it. Binding of amino acids can lead to structural modifications and changes in oligomeric association. Activity is also inhibited by 3 small molecule inhibitors, tetrahydroquinoline carbonitrile derivative (S010-0261), levothyroxine and liothyronine, which can disrupt the AldR-DNA complex. Transcriptional regulator that might play a role under hypoxic conditions. Regulates the expression of ald, which encodes L-alanine dehydrogenase. Serves as both an activator for ald expression in the presence of L-alanine and a repressor in the absence of L-alanine. Acts by binding directly to the upstream region of the ald gene. Four AldR-binding sites (O2, O1, O4 and O3) were identified upstream of the ald gene. O2, O1 and O4 are required for the induction of ald expression by alanine, while O3 is directly involved in the repression of ald expression, by occluding the access of RNA polymerase to the ald promoter. In addition to O3, both O1 and O4 are also necessary for full repression of ald expression in the absence of alanine. This chain is HTH-type transcriptional regulator AldR, found in Mycobacterium tuberculosis (strain ATCC 25618 / H37Rv).